We begin with the raw amino-acid sequence, 241 residues long: Probable pectate lyase D (241 aa).

A signal peptide spans 1-17 (MYQKSLLFSLLATSALA). The N-linked (GlcNAc...) asparagine glycan is linked to asparagine 215. Residues 215 to 241 (NNSGDEPEEVSEGPSDACQYSEPLSSC) form a disordered region.

This sequence belongs to the polysaccharide lyase 3 family. The cofactor is Ca(2+).

It is found in the secreted. The catalysed reaction is Eliminative cleavage of (1-&gt;4)-alpha-D-galacturonan to give oligosaccharides with 4-deoxy-alpha-D-galact-4-enuronosyl groups at their non-reducing ends.. Functionally, pectinolytic enzyme consist of four classes of enzymes: pectin lyase, polygalacturonase, pectin methylesterase and rhamnogalacturonase. Among pectinolytic enzymes, pectin lyase is the most important in depolymerization of pectin, since it cleaves internal glycosidic bonds of highly methylated pectins. Favors pectate, the anion, over pectin, the methyl ester. This is Probable pectate lyase D (plyD) from Neosartorya fischeri (strain ATCC 1020 / DSM 3700 / CBS 544.65 / FGSC A1164 / JCM 1740 / NRRL 181 / WB 181) (Aspergillus fischerianus).